The primary structure comprises 179 residues: Peptidyl-tRNA hydrolase 2, mitochondrial (179 aa).

A helical membrane pass occupies residues 10–32 (YLTNPGALSLAAGVACGVCLGWG). Residues Lys76, Lys81, Lys95, Lys106, Lys115, Lys171, and Lys177 each participate in a glycyl lysine isopeptide (Lys-Gly) (interchain with G-Cter in ubiquitin) cross-link.

This sequence belongs to the PTH2 family. In terms of assembly, monomer. Post-translationally, ubiquitinated by PRKN during mitophagy, leading to its degradation and enhancement of mitophagy. Deubiquitinated by USP30.

It localises to the mitochondrion outer membrane. The enzyme catalyses an N-acyl-L-alpha-aminoacyl-tRNA + H2O = an N-acyl-L-amino acid + a tRNA + H(+). Functionally, peptidyl-tRNA hydrolase which releases tRNAs from the ribosome during protein synthesis. Promotes caspase-independent apoptosis by regulating the function of two transcriptional regulators, AES and TLE1. This chain is Peptidyl-tRNA hydrolase 2, mitochondrial (PTRH2), found in Bos taurus (Bovine).